We begin with the raw amino-acid sequence, 109 residues long: Nucleoid-associated protein Sbal223_1770 (109 aa).

The protein belongs to the YbaB/EbfC family. In terms of assembly, homodimer.

It localises to the cytoplasm. The protein localises to the nucleoid. Functionally, binds to DNA and alters its conformation. May be involved in regulation of gene expression, nucleoid organization and DNA protection. The protein is Nucleoid-associated protein Sbal223_1770 of Shewanella baltica (strain OS223).